The chain runs to 340 residues: Phenylalanine--tRNA ligase alpha subunit (340 aa).

Residue E255 participates in Mg(2+) binding.

The protein belongs to the class-II aminoacyl-tRNA synthetase family. Phe-tRNA synthetase alpha subunit type 1 subfamily. Tetramer of two alpha and two beta subunits. The cofactor is Mg(2+).

It is found in the cytoplasm. It carries out the reaction tRNA(Phe) + L-phenylalanine + ATP = L-phenylalanyl-tRNA(Phe) + AMP + diphosphate + H(+). This chain is Phenylalanine--tRNA ligase alpha subunit, found in Syntrophomonas wolfei subsp. wolfei (strain DSM 2245B / Goettingen).